The sequence spans 376 residues: Queuine tRNA-ribosyltransferase (376 aa).

Aspartate 89 acts as the Proton acceptor in catalysis. Residues 89–93 (DSGGF), aspartate 143, glutamine 187, and glycine 214 each bind substrate. The tract at residues 245 to 251 (GVGKPQD) is RNA binding. Residue aspartate 264 is the Nucleophile of the active site. The RNA binding; important for wobble base 34 recognition stretch occupies residues 269 to 273 (TRNAR). The Zn(2+) site is built by cysteine 302, cysteine 304, cysteine 307, and histidine 333.

Belongs to the queuine tRNA-ribosyltransferase family. Homodimer. Within each dimer, one monomer is responsible for RNA recognition and catalysis, while the other monomer binds to the replacement base PreQ1. Zn(2+) serves as cofactor.

It catalyses the reaction 7-aminomethyl-7-carbaguanine + guanosine(34) in tRNA = 7-aminomethyl-7-carbaguanosine(34) in tRNA + guanine. It participates in tRNA modification; tRNA-queuosine biosynthesis. Functionally, catalyzes the base-exchange of a guanine (G) residue with the queuine precursor 7-aminomethyl-7-deazaguanine (PreQ1) at position 34 (anticodon wobble position) in tRNAs with GU(N) anticodons (tRNA-Asp, -Asn, -His and -Tyr). Catalysis occurs through a double-displacement mechanism. The nucleophile active site attacks the C1' of nucleotide 34 to detach the guanine base from the RNA, forming a covalent enzyme-RNA intermediate. The proton acceptor active site deprotonates the incoming PreQ1, allowing a nucleophilic attack on the C1' of the ribose to form the product. After dissociation, two additional enzymatic reactions on the tRNA convert PreQ1 to queuine (Q), resulting in the hypermodified nucleoside queuosine (7-(((4,5-cis-dihydroxy-2-cyclopenten-1-yl)amino)methyl)-7-deazaguanosine). This chain is Queuine tRNA-ribosyltransferase, found in Erwinia tasmaniensis (strain DSM 17950 / CFBP 7177 / CIP 109463 / NCPPB 4357 / Et1/99).